Consider the following 582-residue polypeptide: Semenogelin-2 (582 aa).

Residues 1 to 23 form the signal peptide; the sequence is MKSIILFVLSLLLILEKQAAVMG. The segment at 24–59 is disordered; it reads QKGGSKGQLPSGSSQFPHGQKGQHYFGQKDQQHTKS. Residues 31–40 show a composition bias toward polar residues; sequence QLPSGSSQFP. 3 tandem repeats follow at residues 70–129, 141–200, and 201–260. Positions 70–559 are repeat-rich region; sequence HVDINDHDWT…SSESHNIVIT (490 aa). Disordered stretches follow at residues 132-160, 173-194, 228-248, and 269-582; these read GGQA…SQCS, KEQA…QSSY, EEHS…RLQH, and QTKN…PIST. Polar residues-rich tracts occupy residues 137-160 and 174-194; these read HGTQ…SQCS and EQAS…QSSY. The segment at 261 to 500 is 4 X 60 AA tandem repeats, type I; that stretch reads LVYNKNQHQT…QSSISFQIEK (240 aa). Asparagine 272 carries an N-linked (GlcNAc...) asparagine glycan. A compositionally biased stretch (basic and acidic residues) spans 292 to 310; that stretch reads RTEERQLHHGEKSVQKDVS. Positions 325-334 are enriched in polar residues; that stretch reads KSQNQVTIHS. A compositionally biased stretch (basic and acidic residues) spans 335–345; it reads QDQEHGHKENK. Over residues 372–397 the composition is skewed to polar residues; the sequence is GSISIQTEEQIHGKSQNQVRIPSQAQ. Basic and acidic residues predominate over residues 413 to 426; that stretch reads TEERRLNSGEKDVQ. Positions 445–455 are enriched in polar residues; the sequence is KSQNQVTIPSQ. Residues 456-465 show a composition bias toward basic and acidic residues; sequence DQEHGHKENK. 2 stretches are compositionally biased toward polar residues: residues 482–496 and 506–532; these read GKST…SISF and SQIQ…QSAD. Residues 501–559 form a 3-2 repeat; it reads LVEGKSQIQTPNPNQDQWSGQNAKGKSGQSADSKQDLLSHEQKGRYKQESSESHNIVIT. 2 stretches are compositionally biased toward basic and acidic residues: residues 533–552 and 559–582; these read SKQD…ESSE and TEHE…PIST.

Belongs to the semenogelin family. As to quaternary structure, interacts with SERPINA5. Semenogelin-2 is thought to form both the 71 kDa polypeptide and, in its glycosylated form, the 76 kDa polypeptide. In terms of tissue distribution, seminal vesicles, and to a much lesser extent, epididymis.

It is found in the secreted. Its function is as follows. Participates in the formation of a gel matrix (sperm coagulum) entrapping the accessory gland secretions and ejaculated spermatozoa. The protein is Semenogelin-2 (SEMG2) of Homo sapiens (Human).